The sequence spans 803 residues: Translation initiation factor IF-2 (803 aa).

Disordered stretches follow at residues 95 to 125 (PVVEQKRETEPAPTQEVPLTSDTTNLNEKAE) and 138 to 178 (EVKE…EREE). Residues 111-121 (VPLTSDTTNLN) show a composition bias toward polar residues. Residues 138-155 (EVKEEAKKTPSEKKETPK) show a composition bias toward basic and acidic residues. Positions 156–167 (KGPRKETRRSRK) are enriched in basic residues. The span at 168–178 (PDKEDKWEREE) shows a compositional bias: basic and acidic residues. One can recognise a tr-type G domain in the interval 302 to 471 (PRAPVVTIMG…LLQAEVLELK (170 aa)). The G1 stretch occupies residues 311 to 318 (GHVDHGKT). 311 to 318 (GHVDHGKT) serves as a coordination point for GTP. Residues 336–340 (GITQH) are G2. Positions 357 to 360 (DTPG) are G3. GTP is bound by residues 357–361 (DTPGH) and 411–414 (NKID). Residues 411-414 (NKID) form a G4 region. Positions 447-449 (SAK) are G5.

It belongs to the TRAFAC class translation factor GTPase superfamily. Classic translation factor GTPase family. IF-2 subfamily.

The protein resides in the cytoplasm. Its function is as follows. One of the essential components for the initiation of protein synthesis. Protects formylmethionyl-tRNA from spontaneous hydrolysis and promotes its binding to the 30S ribosomal subunits. Also involved in the hydrolysis of GTP during the formation of the 70S ribosomal complex. This is Translation initiation factor IF-2 from Coxiella burnetii (strain Dugway 5J108-111).